The primary structure comprises 86 residues: Large ribosomal subunit protein bL31B (86 aa).

It belongs to the bacterial ribosomal protein bL31 family. Type B subfamily. Part of the 50S ribosomal subunit.

In Vibrio campbellii (strain ATCC BAA-1116), this protein is Large ribosomal subunit protein bL31B.